The chain runs to 200 residues: Putative protein ATXN8OS (200 aa).

The interval 19 to 39 (PFSGLKEEEEEDGEDDEEEEE) is disordered. Residues 25 to 39 (EEEEEDGEDDEEEEE) show a composition bias toward acidic residues.

As to expression, expressed in brain. Expressed in muscle tissues (at protein level).

It localises to the cytoplasm. In Homo sapiens (Human), this protein is Putative protein ATXN8OS.